The sequence spans 20 residues: Brevinin-1DYc (20 aa).

A disulfide bond links Cys14 and Cys20.

In terms of tissue distribution, expressed by the skin glands.

It localises to the secreted. Functionally, antimicrobial peptide. Has low activity against the Gram-positive bacterium S.aureus and the Gram-negative bacterium E.coli (MIC&lt;15 uM). Has a strong hemolytic activity. This Rana dybowskii (Dybovsky's frog) protein is Brevinin-1DYc.